Reading from the N-terminus, the 256-residue chain is MAQYDPVLLSVDKHVALITVNDPDRRNAVTDEMSAQLRAAIQRAEGDPDVHAVVVTGAGKAFCAGADLSALGAGVGDPAEPRLLRLYDGFMAVSSCNLPTIAAVNGAAVGAGLNLALAADVRIAGPAALFDARFQKLGLHPGGGATWMLQRAVGPQVARAALLFGMCFDAESAVRHGLALMVADDPVTAALELAAGPAAAPREVVLASKATMRATASPGSLDLEQHELAKRLELGPQAKSVQSPEFAARLAAAQHR.

Residues 235–256 (GPQAKSVQSPEFAARLAAAQHR) are disordered.

The protein belongs to the enoyl-CoA hydratase/isomerase family.

It catalyses the reaction a (3S)-3-hydroxyacyl-CoA = a (2E)-enoyl-CoA + H2O. The enzyme catalyses a 4-saturated-(3S)-3-hydroxyacyl-CoA = a (3E)-enoyl-CoA + H2O. In terms of biological role, could possibly oxidize fatty acids using specific components. This Mycobacterium tuberculosis (strain CDC 1551 / Oshkosh) protein is Probable enoyl-CoA hydratase echA14 (echA14).